Reading from the N-terminus, the 102-residue chain is Large ribosomal subunit protein bL21 (102 aa).

It belongs to the bacterial ribosomal protein bL21 family. Part of the 50S ribosomal subunit. Contacts protein L20.

This protein binds to 23S rRNA in the presence of protein L20. This Bacillus cytotoxicus (strain DSM 22905 / CIP 110041 / 391-98 / NVH 391-98) protein is Large ribosomal subunit protein bL21.